We begin with the raw amino-acid sequence, 64 residues long: Large ribosomal subunit protein bL35 (64 aa).

The segment covering 22-31 (GKVKHGHAYR) has biased composition (basic residues). Residues 22–64 (GKVKHGHAYRSHLAQSKTTKQKRQSRKSTLMNNSDFKRLKKLI) are disordered.

The protein belongs to the bacterial ribosomal protein bL35 family.

The protein is Large ribosomal subunit protein bL35 of Mesomycoplasma hyopneumoniae (strain 232) (Mycoplasma hyopneumoniae).